The following is a 178-amino-acid chain: Interleukin-1 receptor antagonist protein (178 aa).

Residues 1 to 26 (MEICWGPYSHLISLLLILLFHSEAAC) form the signal peptide. Residues cysteine 92 and cysteine 142 are joined by a disulfide bond. Asparagine 110 carries an N-linked (GlcNAc...) asparagine glycan.

This sequence belongs to the IL-1 family.

Its subcellular location is the secreted. The protein localises to the cytoplasm. Anti-inflammatory antagonist of interleukin-1 family of proinflammatory cytokines such as interleukin-1beta/IL1B and interleukin-1alpha/IL1A. Protects from immune dysregulation and uncontrolled systemic inflammation triggered by IL1 for a range of innate stimulatory agents such as pathogens. This is Interleukin-1 receptor antagonist protein (Il1rn) from Mus musculus (Mouse).